Here is a 298-residue protein sequence, read N- to C-terminus: Elongation factor Ts (298 aa).

The involved in Mg(2+) ion dislocation from EF-Tu stretch occupies residues 79-82 (TDFV).

The protein belongs to the EF-Ts family.

It is found in the cytoplasm. Its function is as follows. Associates with the EF-Tu.GDP complex and induces the exchange of GDP to GTP. It remains bound to the aminoacyl-tRNA.EF-Tu.GTP complex up to the GTP hydrolysis stage on the ribosome. This is Elongation factor Ts from Cereibacter sphaeroides (strain ATCC 17025 / ATH 2.4.3) (Rhodobacter sphaeroides).